Reading from the N-terminus, the 347-residue chain is Merozoite surface protein P12 (347 aa).

A signal peptide (or 25) is located at residues Met-1 to Cys-23. 6-Cys domains are found at residues Lys-27–Leu-172 and Lys-175–Ser-305. Asn-28 is a glycosylation site (N-linked (GlcNAc...) asparagine). 3 cysteine pairs are disulfide-bonded: Cys-31-Cys-53, Cys-67-Cys-138, and Cys-81-Cys-136. N-linked (GlcNAc...) asparagine glycans are attached at residues Asn-147, Asn-200, Asn-228, Asn-242, Asn-265, and Asn-322. Disulfide bonds link Cys-179–Cys-211, Cys-225–Cys-286, and Cys-236–Cys-284. Residue Asn-322 is the site of GPI-anchor amidated asparagine attachment. Residues Ser-323 to Leu-347 constitute a propeptide, removed in mature form.

As to quaternary structure, heterodimer; heterodimerizes with PF41. May form an antiparallel heterodimer with PF41.

The protein resides in the cell surface. It is found in the cell membrane. The chain is Merozoite surface protein P12 (PF12) from Plasmodium falciparum.